Here is a 230-residue protein sequence, read N- to C-terminus: 7-cyano-7-deazaguanine synthase (230 aa).

8 to 18 (FSGGQDSTTCL) contributes to the ATP binding site. C187, C196, C199, and C202 together coordinate Zn(2+).

This sequence belongs to the QueC family. The cofactor is Zn(2+).

It catalyses the reaction 7-carboxy-7-deazaguanine + NH4(+) + ATP = 7-cyano-7-deazaguanine + ADP + phosphate + H2O + H(+). It functions in the pathway purine metabolism; 7-cyano-7-deazaguanine biosynthesis. Functionally, catalyzes the ATP-dependent conversion of 7-carboxy-7-deazaguanine (CDG) to 7-cyano-7-deazaguanine (preQ(0)). The protein is 7-cyano-7-deazaguanine synthase of Shewanella amazonensis (strain ATCC BAA-1098 / SB2B).